The following is a 161-amino-acid chain: Troponin C, slow skeletal and cardiac muscles (161 aa).

The residue at position 1 (methionine 1) is an N-acetylmethionine. EF-hand domains are found at residues 16–51 (QKNE…LGQN), 52–87 (PTPE…CMKD), 92–127 (KSEE…TGET), and 128–161 (ITED…KGVE). Residues aspartate 65, aspartate 67, serine 69, threonine 71, and glutamate 76 each contribute to the Ca(2+) site. A Phosphoserine modification is found at serine 98. 10 residues coordinate Ca(2+): aspartate 105, asparagine 107, aspartate 109, tyrosine 111, glutamate 116, aspartate 141, asparagine 143, aspartate 145, arginine 147, and glutamate 152.

The protein belongs to the troponin C family.

Functionally, troponin is the central regulatory protein of striated muscle contraction. Tn consists of three components: Tn-I which is the inhibitor of actomyosin ATPase, Tn-T which contains the binding site for tropomyosin and Tn-C. The binding of calcium to Tn-C abolishes the inhibitory action of Tn on actin filaments. This Bos taurus (Bovine) protein is Troponin C, slow skeletal and cardiac muscles (TNNC1).